The sequence spans 178 residues: MLPEIGAAELLIIAAVALIVVGPKDLPLLMRRIGQFMAKVRSMASEFRASFDDMARQSELDDLRKEVEAMRRGQFADMSIADGAMTEAAGDIEKSLAGVGVQLHSPTGYENTVEPPPPEPEPQPAAEPAPKPARKPRAAKPKAAAAPKAAAKPKAAAKPKPKPKTPGLKARKTAGSAE.

The chain crosses the membrane as a helical span at residues 2–22; the sequence is LPEIGAAELLIIAAVALIVVG. The interval 104–178 is disordered; it reads HSPTGYENTV…KARKTAGSAE (75 aa). Residues 114–131 are compositionally biased toward pro residues; it reads EPPPPEPEPQPAAEPAPK. A compositionally biased stretch (low complexity) spans 141–154; sequence PKAAAAPKAAAKPK.

It belongs to the TatB family. In terms of assembly, the Tat system comprises two distinct complexes: a TatABC complex, containing multiple copies of TatA, TatB and TatC subunits, and a separate TatA complex, containing only TatA subunits. Substrates initially bind to the TatABC complex, which probably triggers association of the separate TatA complex to form the active translocon.

It is found in the cell inner membrane. Its function is as follows. Part of the twin-arginine translocation (Tat) system that transports large folded proteins containing a characteristic twin-arginine motif in their signal peptide across membranes. Together with TatC, TatB is part of a receptor directly interacting with Tat signal peptides. TatB may form an oligomeric binding site that transiently accommodates folded Tat precursor proteins before their translocation. The chain is Sec-independent protein translocase protein TatB from Phenylobacterium zucineum (strain HLK1).